The sequence spans 303 residues: Elongation factor Ts (303 aa).

The interval 79–82 (TDFV) is involved in Mg(2+) ion dislocation from EF-Tu.

The protein belongs to the EF-Ts family.

Its subcellular location is the cytoplasm. Associates with the EF-Tu.GDP complex and induces the exchange of GDP to GTP. It remains bound to the aminoacyl-tRNA.EF-Tu.GTP complex up to the GTP hydrolysis stage on the ribosome. This chain is Elongation factor Ts, found in Syntrophotalea carbinolica (strain DSM 2380 / NBRC 103641 / GraBd1) (Pelobacter carbinolicus).